The sequence spans 113 residues: Protein suex-1 (113 aa).

A signal peptide spans 1 to 22 (MQSLLVFCLATIILSNFTEASA).

The polypeptide is Protein suex-1 (Caenorhabditis elegans).